The primary structure comprises 20 residues: Hongotoxin-5 (20 aa).

Belongs to the short scorpion toxin superfamily. Potassium channel inhibitor family. Alpha-KTx 02 subfamily. In terms of tissue distribution, expressed by the venom gland.

It localises to the secreted. Its function is as follows. Potent selective inhibitor of Kv1/KCNA voltage-gated potassium channels. This is Hongotoxin-5 from Centruroides limbatus (Bark scorpion).